A 37-amino-acid chain; its full sequence is Large ribosomal subunit protein bL36 (37 aa).

This sequence belongs to the bacterial ribosomal protein bL36 family.

The protein is Large ribosomal subunit protein bL36 of Mycobacterium leprae (strain Br4923).